The chain runs to 116 residues: Large ribosomal subunit protein bL19 (116 aa).

The protein belongs to the bacterial ribosomal protein bL19 family.

In terms of biological role, this protein is located at the 30S-50S ribosomal subunit interface and may play a role in the structure and function of the aminoacyl-tRNA binding site. In Histophilus somni (strain 129Pt) (Haemophilus somnus), this protein is Large ribosomal subunit protein bL19.